A 484-amino-acid polypeptide reads, in one-letter code: Glutamyl-tRNA(Gln) amidotransferase subunit A (484 aa).

Active-site charge relay system residues include lysine 76 and serine 151. Serine 175 functions as the Acyl-ester intermediate in the catalytic mechanism.

It belongs to the amidase family. GatA subfamily. Heterotrimer of A, B and C subunits.

It carries out the reaction L-glutamyl-tRNA(Gln) + L-glutamine + ATP + H2O = L-glutaminyl-tRNA(Gln) + L-glutamate + ADP + phosphate + H(+). Its function is as follows. Allows the formation of correctly charged Gln-tRNA(Gln) through the transamidation of misacylated Glu-tRNA(Gln) in organisms which lack glutaminyl-tRNA synthetase. The reaction takes place in the presence of glutamine and ATP through an activated gamma-phospho-Glu-tRNA(Gln). The sequence is that of Glutamyl-tRNA(Gln) amidotransferase subunit A from Thioalkalivibrio sulfidiphilus (strain HL-EbGR7).